The following is a 425-amino-acid chain: Glutamate-1-semialdehyde 2,1-aminomutase (425 aa).

An N6-(pyridoxal phosphate)lysine modification is found at Lys-266.

The protein belongs to the class-III pyridoxal-phosphate-dependent aminotransferase family. HemL subfamily. As to quaternary structure, homodimer. Pyridoxal 5'-phosphate is required as a cofactor.

Its subcellular location is the cytoplasm. The enzyme catalyses (S)-4-amino-5-oxopentanoate = 5-aminolevulinate. It functions in the pathway porphyrin-containing compound metabolism; protoporphyrin-IX biosynthesis; 5-aminolevulinate from L-glutamyl-tRNA(Glu): step 2/2. This chain is Glutamate-1-semialdehyde 2,1-aminomutase, found in Nitratidesulfovibrio vulgaris (strain DSM 19637 / Miyazaki F) (Desulfovibrio vulgaris).